Consider the following 1579-residue polypeptide: DNA-directed RNA polymerase subunit beta' (1579 aa).

4 residues coordinate Zn(2+): Cys65, Cys67, Cys80, and Cys83. Residues Asp601, Asp603, and Asp605 each coordinate Mg(2+). Cys938, Cys1012, Cys1019, and Cys1022 together coordinate Zn(2+).

This sequence belongs to the RNA polymerase beta' chain family. In terms of assembly, the RNAP catalytic core consists of 2 alpha, 1 beta, 1 beta' and 1 omega subunit. When a sigma factor is associated with the core the holoenzyme is formed, which can initiate transcription. Mg(2+) serves as cofactor. The cofactor is Zn(2+).

It catalyses the reaction RNA(n) + a ribonucleoside 5'-triphosphate = RNA(n+1) + diphosphate. Functionally, DNA-dependent RNA polymerase catalyzes the transcription of DNA into RNA using the four ribonucleoside triphosphates as substrates. In Sulfurihydrogenibium sp. (strain YO3AOP1), this protein is DNA-directed RNA polymerase subunit beta'.